Consider the following 3856-residue polypeptide: Serine/threonine-protein kinase ATM (3856 aa).

Residues 108–162 (VGNLVWVMTKYKKWWPGEVVDFKADAKESFMVRSIGQSHLVSWFASSKLKPFKES) enclose the PWWP domain. Residues 648-681 (GIPDLNGTNTEPTLVLPQVEPTQRRRRRKKEESP) form a disordered region. The FAT domain occupies 2727-3393 (VVAGSAVVCG…ILQLLALANG (667 aa)). The Bipartite nuclear localization signal signature appears at 3233–3249 (RKHKTKELEVFIKRFKS). One can recognise a PI3K/PI4K catalytic domain in the interval 3499–3811 (LSDSVTVMNG…GNKDATRALM (313 aa)). Positions 3505 to 3511 (VMNGINA) are G-loop. The interval 3678–3686 (GLGDRHAMN) is catalytic loop. The activation loop stretch occupies residues 3698–3722 (HIDLGVAFEQGLMLKTPERVPFRLT). Positions 3824–3856 (EMRSIHGQAQQLIQDAIDTDRLSHMFPGWGAWM) constitute an FATC domain.

Belongs to the PI3/PI4-kinase family. Interacts with RUG3. Ubiquitously expressed at low levels with slightly higher levels in flower buds.

It is found in the nucleus. It catalyses the reaction L-seryl-[protein] + ATP = O-phospho-L-seryl-[protein] + ADP + H(+). It carries out the reaction L-threonyl-[protein] + ATP = O-phospho-L-threonyl-[protein] + ADP + H(+). Serine/threonine protein kinase which activates checkpoint signaling upon genotoxic stresses such as ionizing radiation (IR) or DNA replication stalling. Plays a central role in the perception and response to both stress-induced damage in somatic cells and developmentally programmed DNA damage during meiosis. Recognizes the substrate consensus sequence [ST]-Q. Phosphorylates histone variant H2AX to form H2AXS139ph at double strand breaks (DSBs), thereby regulating DNA damage response mechanism. Involved in transcriptional regulation of RAD51, PARP1, GR1, and LIG4 in response to DNA double strand breaks. Plays a dual role by activating the DNA damage response at dysfunctional telomeres and yet preventing this activation at functional telomeres. Not required for telomere length homeostasis. Regulates DNA damage response (DDR) synergistically with RUG3. Together with RUG3, involved in the splicing of the ND2/NAD2 mRNA. This is Serine/threonine-protein kinase ATM from Arabidopsis thaliana (Mouse-ear cress).